Reading from the N-terminus, the 484-residue chain is uncharacterized protein (484 aa).

Transmembrane regions (helical) follow at residues leucine 19–valine 39, valine 78–valine 98, phenylalanine 111–leucine 131, isoleucine 134–leucine 154, phenylalanine 165–isoleucine 185, isoleucine 199–glycine 219, threonine 249–phenylalanine 269, isoleucine 289–leucine 309, isoleucine 321–leucine 341, leucine 360–leucine 380, phenylalanine 398–leucine 418, and leucine 440–leucine 460.

It is found in the cell membrane. This is an uncharacterized protein from Mesomycoplasma hyopneumoniae (strain 232) (Mycoplasma hyopneumoniae).